The sequence spans 380 residues: Flap endonuclease 1 (380 aa).

The segment at 1–105 is N-domain; it reads MGIKGLAQVL…GELAKRVARH (105 aa). Residue aspartate 34 participates in Mg(2+) binding. Positions 47 and 71 each coordinate DNA. Mg(2+)-binding residues include aspartate 87, glutamate 159, glutamate 161, aspartate 180, and aspartate 182. The I-domain stretch occupies residues 123–254; it reads MVDRFAKRTV…ARAVELIRQY (132 aa). Glutamate 159 contributes to the DNA binding site. Residues glycine 232 and aspartate 234 each coordinate DNA. Aspartate 234 lines the Mg(2+) pocket. Residues 337–345 form an interaction with PCNA region; that stretch reads PQGRLDSFF. A disordered region spans residues 340-380; that stretch reads RLDSFFKPVPSSPKKPVDTKSKGSAKRKRDSNKGGESKKKR. Over residues 342–353 the composition is skewed to low complexity; sequence DSFFKPVPSSPK. 2 positions are modified to phosphoserine: serine 350 and serine 351. Residues 370–380 show a composition bias toward basic and acidic residues; sequence SNKGGESKKKR.

This sequence belongs to the XPG/RAD2 endonuclease family. FEN1 subfamily. As to quaternary structure, interacts with PCNA. Three molecules of rad2 bind to one PCNA trimer with each molecule binding to one PCNA monomer. PCNA stimulates the nuclease activity without altering cleavage specificity. It depends on Mg(2+) as a cofactor. Post-translationally, phosphorylated. Phosphorylation upon DNA damage induces relocalization to the nuclear plasma.

The protein resides in the nucleus. It localises to the nucleolus. The protein localises to the nucleoplasm. Its subcellular location is the mitochondrion. Structure-specific nuclease with 5'-flap endonuclease and 5'-3' exonuclease activities involved in DNA replication and repair. During DNA replication, cleaves the 5'-overhanging flap structure that is generated by displacement synthesis when DNA polymerase encounters the 5'-end of a downstream Okazaki fragment. It enters the flap from the 5'-end and then tracks to cleave the flap base, leaving a nick for ligation. Also involved in the long patch base excision repair (LP-BER) pathway, by cleaving within the apurinic/apyrimidinic (AP) site-terminated flap. Acts as a genome stabilization factor that prevents flaps from equilibrating into structures that lead to duplications and deletions. Also possesses 5'-3' exonuclease activity on nicked or gapped double-stranded DNA, and exhibits RNase H activity. Also involved in replication and repair of rDNA and in repairing mitochondrial DNA. This is Flap endonuclease 1 from Schizosaccharomyces pombe (strain 972 / ATCC 24843) (Fission yeast).